Reading from the N-terminus, the 708-residue chain is Double-strand break repair protein MRE11 (708 aa).

Residue serine 2 is modified to N-acetylserine. At serine 2 the chain carries Phosphoserine. Aspartate 20, histidine 22, and aspartate 60 together coordinate Mn(2+). The segment at 87–117 (RPVQFEILSDQSVNFGFSKFPWVNYQDGNLN) is interaction with NBN. Asparagine 128 contributes to the Mn(2+) binding site. Histidine 129 (proton donor) is an active-site residue. Residues histidine 217, histidine 245, and histidine 247 each contribute to the Mn(2+) site. Lysine 255 participates in a covalent cross-link: Glycyl lysine isopeptide (Lys-Gly) (interchain with G-Cter in SUMO2). Phosphoserine is present on serine 275. Lysine 282 is covalently cross-linked (Glycyl lysine isopeptide (Lys-Gly) (interchain with G-Cter in UFM1)). A Glycyl lysine isopeptide (Lys-Gly) (interchain with G-Cter in ubiquitin) cross-link involves residue lysine 339. Residue lysine 384 forms a Glycyl lysine isopeptide (Lys-Gly) (interchain with G-Cter in SUMO) linkage. Residue lysine 416 forms a Glycyl lysine isopeptide (Lys-Gly) (interchain with G-Cter in SUMO2) linkage. Residue lysine 467 forms a Glycyl lysine isopeptide (Lys-Gly) (interchain with G-Cter in SUMO) linkage. Residue lysine 480 forms a Glycyl lysine isopeptide (Lys-Gly) (interchain with G-Cter in ubiquitin) linkage. Disordered stretches follow at residues 507–540 (TRQK…ASAF) and 556–614 (NDSD…AVSA). Basic residues predominate over residues 569 to 579 (GRGRGRGRRGG). An asymmetric dimethylarginine mark is found at arginine 570, arginine 572, arginine 574, arginine 576, arginine 577, arginine 580, arginine 587, arginine 592, and arginine 594. A GAR motif is present at residues 570–594 (RGRGRGRRGGRGQNSASRGGSQRGR). Positions 599–614 (LETSTRSRNSKTAVSA) are enriched in polar residues. Serine 619 carries the post-translational modification Phosphoserine. A Glycyl lysine isopeptide (Lys-Gly) (interchain with G-Cter in SUMO2) cross-link involves residue lysine 625. Residue serine 641 is modified to Phosphoserine. Residue serine 649 is modified to Phosphoserine; by PLK1. Residues 651 to 708 (VEEDIFPTTSKTDQRWSSTSSSKIMSQSQVSKGVDFESSEDDDDDPFMNTSSLRRNRR) are disordered. Low complexity predominate over residues 667–681 (SSTSSSKIMSQSQVS). Lysine 673 carries the N6-lactoyllysine modification. A phosphoserine; by ATM mark is found at serine 676 and serine 678. Over residues 687–696 (ESSEDDDDDP) the composition is skewed to acidic residues. Serine 688 is modified (phosphoserine; by CDK2). Serine 689 and serine 701 each carry phosphoserine. Over residues 698-708 (MNTSSLRRNRR) the composition is skewed to polar residues.

It belongs to the MRE11/RAD32 family. As to quaternary structure, component of the MRN complex composed of two heterodimers RAD50 and MRE11 associated with a single NBN. The MRN complexes dimerize on DNA to form joined MRN-MRN oligomers required for DNA double-strand break repair. As part of the MRN complex, interacts with MCM9; the interaction recruits the complex to DNA repair sites. Component of the BASC complex, at least composed of BRCA1, MSH2, MSH6, MLH1, ATM, BLM, RAD50, MRE11 and NBN. Found in a complex with TERF2. Interacts with DCLRE1C/Artemis and DCLRE1B/Apollo. Interacts with ATF2. Interacts with EXD2. Interacts with MRNIP. Interacts with SAMHD1; leading to stimulate 3'-5' exonuclease activity. Interacts (when ubiquitinated) with UBQLN4 (via its UBA domain). Interacts with CYREN (via XLF motif). Interacts with GFI1; promoting methylation by PRMT1. Interacts with DYNLL1; inhibiting the activity of MRE11. Interacts with C1QBP and RAD50; interaction takes place in absence of DNA damage to form the MRC (MRE11-RAD50-C1QBP) complex that inhibits the activity of MRE11. Interacts with AGER/RAGE. AGER is recruited to DNA double-strand break sites where it enhances MRE11 endonuclease activity to promote DNA repair. (Microbial infection) Interacts with herpes simplex virus 1 protein UL12. The cofactor is Mn(2+). Post-translationally, phosphorylated by ATM at Ser-676 and Ser-678 in response to DNA damage, promoting MRE11 activity: phosphorylation activates MRE11 by preventing the interaction between MRE11 and the C1QBP inhibitor. Phosphorylation at Ser-649 by PLK1 primes for phosphorylation at Ser-688 by CK2, inhibiting recruitment of the MRN complex to DNA damage sites. Asymmetric dimethylation by PRMT1 promotes MRE11 exonuclease activity. In terms of processing, lactylation at Lys-673 by CREBBP/CBP in response to DNA damage promotes DNA binding and MRE11 activity. Post-translationally, acetylated on lysine residues by KAT2A /GCN5. Ubiquitinated following DNA damage. Ubiquitination triggers interaction with UBQLN4, leading to MRE11 removal from chromatin and degradation by the proteasome. Ubiquitinated at Lys-339 and Lys-480 by RNF126 via 'Lys-27'- and 'Lys-29'-linked polyubiquitin chains, promoting the exonuclease activity of MRE11. In terms of processing, SUMOylated by PIAS1, stabilizing MRE11 on chromatin during end resection. DeSUMOylated by SENP3 following removal from DNA double-strand breaks (DSBs). Post-translationally, ufmylation at Lys-282 promotes MRE11 activity and is required for activation of the ATM and ATR kinases by the MRN complex. (Microbial infection) Following infection by adenovirus E4, ubiquitinated and degraded by a SCF-like E3 ubiquitin ligase complex containing viral proteins E1B-55K and E4-ORF6.

It is found in the nucleus. The protein resides in the chromosome. It localises to the telomere. Interaction with SAMHD1 stimulates the double-strand-specific 3'-5' exonuclease activity. RBBP8/CtIP specifically promotes the endonuclease activity to clear protein-DNA adducts and generate clean double-strand break ends. DYNLL1-binding inhibits the activity of MRE11. MRE11 activity is inhibited by C1QBP: in absence of DNA damage, C1QBP interacts with unphosphorylated MRE11, preventing formation and activity of the MRN complex. The mirin-derivative PFM39, specifically inhibits the 3'-5' exonuclease activity. The N-alkylated mirin-derivatives PFM03 and PFM01 specifically inhibit the endonuclease activity. In terms of biological role, core component of the MRN complex, which plays a central role in double-strand break (DSB) repair, DNA recombination, maintenance of telomere integrity and meiosis. The MRN complex is involved in the repair of DNA double-strand breaks (DSBs) via homologous recombination (HR), an error-free mechanism which primarily occurs during S and G2 phases. The complex (1) mediates the end resection of damaged DNA, which generates proper single-stranded DNA, a key initial steps in HR, and is (2) required for the recruitment of other repair factors and efficient activation of ATM and ATR upon DNA damage. Within the MRN complex, MRE11 possesses both single-strand endonuclease activity and double-strand-specific 3'-5' exonuclease activity. After DSBs, MRE11 is loaded onto DSBs sites and cleaves DNA by cooperating with RBBP8/CtIP to initiate end resection. MRE11 first endonucleolytically cleaves the 5' strand at DNA DSB ends to prevent non-homologous end joining (NHEJ) and licence HR. It then generates a single-stranded DNA gap via 3' to 5' exonucleolytic degradation to create entry sites for EXO1- and DNA2-mediated 5' to 3' long-range resection, which is required for single-strand invasion and recombination. RBBP8/CtIP specifically promotes the endonuclease activity of MRE11 to clear protein-DNA adducts and generate clean double-strand break ends. MRE11 endonuclease activity is also enhanced by AGER/RAGE. The MRN complex is also required for DNA damage signaling via activation of the ATM and ATR kinases: the nuclease activity of MRE11 is not required to activate ATM and ATR. The MRN complex is also required for the processing of R-loops. The MRN complex is involved in the activation of the cGAS-STING pathway induced by DNA damage during tumorigenesis: the MRN complex acts by displacing CGAS from nucleosome sequestration, thereby activating it. In telomeres the MRN complex may modulate t-loop formation. MRE11 contains two DNA-binding domains (DBDs), enabling it to bind both single-stranded DNA (ssDNA) and double-stranded DNA (dsDNA). This Homo sapiens (Human) protein is Double-strand break repair protein MRE11.